A 484-amino-acid polypeptide reads, in one-letter code: Poly(A) RNA polymerase GLD2 (484 aa).

Residues serine 62 and serine 69 each carry the phosphoserine modification. The disordered stretch occupies residues 72-97 (FRGRKRLSDEKNLPLDGKRQRFHSPH). A Nuclear localization signal motif is present at residues 76 to 92 (KRLSDEKNLPLDGKRQR). Over residues 77–90 (RLSDEKNLPLDGKR) the composition is skewed to basic and acidic residues. Serine 95 bears the Phosphoserine mark. Mg(2+) contacts are provided by aspartate 213 and aspartate 215. The region spanning 386-440 (NLGDLLLGFLKYYATEFDWNSQMISVREAKAIPRPDGIEWRNKYICVEEPFDGTN) is the PAP-associated domain.

This sequence belongs to the DNA polymerase type-B-like family. GLD2 subfamily. As to quaternary structure, interacts with CPEB1, CPEB2, CPSF1 and PABPC1. Interacts with QKI isoform QKI7; promoting recruitment to miRNA miR-122 and miR-122 stabilization. The cofactor is Mg(2+). Mn(2+) serves as cofactor. Expressed in brain. Within brain, it is expressed in cerebellum, hippocampus and medulla.

It is found in the cytoplasm. The protein resides in the nucleus. It catalyses the reaction RNA(n) + ATP = RNA(n)-3'-adenine ribonucleotide + diphosphate. Its function is as follows. Cytoplasmic poly(A) RNA polymerase that adds successive AMP monomers to the 3'-end of specific RNAs, forming a poly(A) tail. In contrast to the canonical nuclear poly(A) RNA polymerase, it only adds poly(A) to selected cytoplasmic mRNAs. Does not play a role in replication-dependent histone mRNA degradation. Adds a single nucleotide to the 3' end of specific miRNAs, monoadenylation stabilizes and prolongs the activity of some but not all miRNAs. This Homo sapiens (Human) protein is Poly(A) RNA polymerase GLD2.